Consider the following 201-residue polypeptide: tRNA (guanine-N(7)-)-methyltransferase (201 aa).

S-adenosyl-L-methionine is bound by residues glutamate 33, glutamate 58, aspartate 85, and aspartate 106. Residue aspartate 106 is part of the active site. Substrate is bound by residues lysine 110, aspartate 142, and 180–183 (TTYE).

It belongs to the class I-like SAM-binding methyltransferase superfamily. TrmB family.

It carries out the reaction guanosine(46) in tRNA + S-adenosyl-L-methionine = N(7)-methylguanosine(46) in tRNA + S-adenosyl-L-homocysteine. The protein operates within tRNA modification; N(7)-methylguanine-tRNA biosynthesis. Functionally, catalyzes the formation of N(7)-methylguanine at position 46 (m7G46) in tRNA. The sequence is that of tRNA (guanine-N(7)-)-methyltransferase from Mesomycoplasma hyopneumoniae (strain 7448) (Mycoplasma hyopneumoniae).